A 331-amino-acid chain; its full sequence is 4-hydroxythreonine-4-phosphate dehydrogenase (331 aa).

Residues His137 and Thr138 each coordinate substrate. Positions 167, 212, and 267 each coordinate a divalent metal cation. Substrate-binding residues include Lys275, Asn284, and Arg293.

It belongs to the PdxA family. In terms of assembly, homodimer. Zn(2+) is required as a cofactor. Requires Mg(2+) as cofactor. The cofactor is Co(2+).

It localises to the cytoplasm. It catalyses the reaction 4-(phosphooxy)-L-threonine + NAD(+) = 3-amino-2-oxopropyl phosphate + CO2 + NADH. The protein operates within cofactor biosynthesis; pyridoxine 5'-phosphate biosynthesis; pyridoxine 5'-phosphate from D-erythrose 4-phosphate: step 4/5. Functionally, catalyzes the NAD(P)-dependent oxidation of 4-(phosphooxy)-L-threonine (HTP) into 2-amino-3-oxo-4-(phosphooxy)butyric acid which spontaneously decarboxylates to form 3-amino-2-oxopropyl phosphate (AHAP). This is 4-hydroxythreonine-4-phosphate dehydrogenase from Yersinia pestis bv. Antiqua (strain Angola).